A 252-amino-acid chain; its full sequence is Thiazole synthase (252 aa).

Lys-95 acts as the Schiff-base intermediate with DXP in catalysis. Residues Gly-156, 182–183 (AG), and 204–205 (NT) contribute to the 1-deoxy-D-xylulose 5-phosphate site.

This sequence belongs to the ThiG family. In terms of assembly, homotetramer. Forms heterodimers with either ThiH or ThiS.

It localises to the cytoplasm. It carries out the reaction [ThiS sulfur-carrier protein]-C-terminal-Gly-aminoethanethioate + 2-iminoacetate + 1-deoxy-D-xylulose 5-phosphate = [ThiS sulfur-carrier protein]-C-terminal Gly-Gly + 2-[(2R,5Z)-2-carboxy-4-methylthiazol-5(2H)-ylidene]ethyl phosphate + 2 H2O + H(+). The protein operates within cofactor biosynthesis; thiamine diphosphate biosynthesis. Its function is as follows. Catalyzes the rearrangement of 1-deoxy-D-xylulose 5-phosphate (DXP) to produce the thiazole phosphate moiety of thiamine. Sulfur is provided by the thiocarboxylate moiety of the carrier protein ThiS. In vitro, sulfur can be provided by H(2)S. The sequence is that of Thiazole synthase from Shewanella sp. (strain ANA-3).